The primary structure comprises 212 residues: ER lumen protein-retaining receptor 1 (212 aa).

Over 1–4 the chain is Lumenal; that stretch reads MNLF. A helical transmembrane segment spans residues 5-24; it reads RFLGDLSHLLAIILLLLKIW. Residues 25–32 are Cytoplasmic-facing; it reads KSRSCAGI. A helical transmembrane segment spans residues 33–52; the sequence is SGKSQVLFAVVFTARYLDLF. An interaction with the K-D-E-L motif on target proteins region spans residues 47 to 48; the sequence is RY. Topologically, residues 53–58 are lumenal; sequence TNYISL. A helical membrane pass occupies residues 59–79; that stretch reads YNTCMKVVYIACSFTTVWLIY. Topologically, residues 80 to 92 are cytoplasmic; that stretch reads SKFKATYDGNHDT. The helical transmembrane segment at 93–110 threads the bilayer; it reads FRVEFLVVPTAILAFLVN. Residues 111–116 lie on the Lumenal side of the membrane; that stretch reads HDFTPL. Residues 117–135 form a helical membrane-spanning segment; that stretch reads EILWTFSIYLESVAILPQL. The Cytoplasmic portion of the chain corresponds to 136–149; that stretch reads FMVSKTGEAETITS. Residues 150–168 form a helical membrane-spanning segment; sequence HYLFALGVYRTLYLFNWIW. The interval 159–169 is interaction with the K-D-E-L motif on target proteins; it reads RTLYLFNWIWR. The Lumenal portion of the chain corresponds to 169-178; sequence RYHFEGFFDL. The chain crosses the membrane as a helical span at residues 179 to 199; it reads IAIVAGLVQTVLYCDFFYLYI. Residues 200-212 are Cytoplasmic-facing; sequence TKVLKGKKLSLPA. The segment at 204–207 is important for recycling of cargo proteins with the sequence motif K-D-E-L from the Golgi to the endoplasmic reticulum; that stretch reads KGKK. A Phosphoserine; by PKA modification is found at Ser209.

Belongs to the ERD2 family. Upon ligand binding the receptor oligomerizes and interacts with components of the transport machinery such as ARFGAP1 and ARF1. Post-translationally, phosphorylation by PKA at Ser-209 is required for endoplasmic reticulum retention function.

Its subcellular location is the golgi apparatus membrane. It is found in the cytoplasmic vesicle. It localises to the COPI-coated vesicle membrane. The protein resides in the endoplasmic reticulum membrane. The protein localises to the endoplasmic reticulum-Golgi intermediate compartment membrane. Its function is as follows. Receptor for the C-terminal sequence motif K-D-E-L that is present on endoplasmic reticulum resident proteins and that mediates their recycling from the Golgi back to the endoplasmic reticulum. This is ER lumen protein-retaining receptor 1 (KDELR1) from Homo sapiens (Human).